The primary structure comprises 46 residues: Hellethionin-D (46 aa).

Disulfide bonds link Cys-3/Cys-40, Cys-4/Cys-32, Cys-12/Cys-30, and Cys-16/Cys-26.

The protein belongs to the plant thionin (TC 1.C.44) family. 4 C-C subfamily.

The protein resides in the secreted. In terms of biological role, thionins are small plant proteins which are toxic to animal cells. They seem to exert their toxic effect at the level of the cell membrane. Their precise function is not known. The protein is Hellethionin-D of Helleborus purpurascens (Purple hellebore).